The sequence spans 122 residues: Small ribosomal subunit protein uS12 (122 aa).

Residue Asp89 is modified to 3-methylthioaspartic acid.

The protein belongs to the universal ribosomal protein uS12 family. As to quaternary structure, part of the 30S ribosomal subunit. Contacts proteins S8 and S17. May interact with IF1 in the 30S initiation complex.

Functionally, with S4 and S5 plays an important role in translational accuracy. Its function is as follows. Interacts with and stabilizes bases of the 16S rRNA that are involved in tRNA selection in the A site and with the mRNA backbone. Located at the interface of the 30S and 50S subunits, it traverses the body of the 30S subunit contacting proteins on the other side and probably holding the rRNA structure together. The combined cluster of proteins S8, S12 and S17 appears to hold together the shoulder and platform of the 30S subunit. This is Small ribosomal subunit protein uS12 from Corynebacterium glutamicum (strain R).